The sequence spans 308 residues: D-alanine--D-alanine ligase (308 aa).

An ATP-grasp domain is found at 106–305 (KMLWKAFGLP…FEQLVVKILE (200 aa)). 136–191 (VEKLGLPLMVKPSLEGSSVGLTKVNAIDDLKSAVEFALQYDETVLIEEWLSGDELT) lines the ATP pocket. The Mg(2+) site is built by aspartate 259, glutamate 272, and asparagine 274.

The protein belongs to the D-alanine--D-alanine ligase family. It depends on Mg(2+) as a cofactor. Requires Mn(2+) as cofactor.

It localises to the cytoplasm. It carries out the reaction 2 D-alanine + ATP = D-alanyl-D-alanine + ADP + phosphate + H(+). It functions in the pathway cell wall biogenesis; peptidoglycan biosynthesis. In terms of biological role, cell wall formation. The protein is D-alanine--D-alanine ligase of Histophilus somni (strain 2336) (Haemophilus somnus).